Consider the following 492-residue polypeptide: Probable G-protein coupled receptor Mth-like 8 (492 aa).

Positions 1-21 (MAQFCILGVLLILSGTHCSWG) are cleaved as a signal peptide. Residues 22-218 (FHEETHYPCA…FVLGVREWTY (197 aa)) are Extracellular-facing. Disulfide bonds link C30-C82, C84-C89, C93-C184, and C94-C107. Residues N37 and N51 are each glycosylated (N-linked (GlcNAc...) asparagine). N-linked (GlcNAc...) asparagine glycans are attached at residues N129, N169, and N192. The chain crosses the membrane as a helical span at residues 219 to 239 (AICLLIAILSMFIVLMVYLMC). Residues 240–245 (SEMRNS) lie on the Cytoplasmic side of the membrane. A helical transmembrane segment spans residues 246–266 (FYGVAIKAYAICMILGYALLA). At 267 to 282 (YLTLHNPANLSNAACR) the chain is on the extracellular side. N275 carries N-linked (GlcNAc...) asparagine glycosylation. The helical transmembrane segment at 283 to 303 (ILPSLALMNLVLSFYILSFIA) threads the bilayer. Residues 304-317 (FKLYLSFYGVVFTK) are Cytoplasmic-facing. A helical membrane pass occupies residues 318 to 338 (LMFWLIFTPIVLVAVGWSFFV). At 339–362 (GFSYYGSRLIFGGDTCWFDPRNWS) the chain is on the extracellular side. N-linked (GlcNAc...) asparagine glycosylation is present at N360. Residues 363–383 (VMIYFYAPVFVACAISGFFYV) form a helical membrane-spanning segment. The Cytoplasmic segment spans residues 384 to 411 (LSQIYIRDQPDIETEKSFESIEKNRFKS). The chain crosses the membrane as a helical span at residues 412–432 (FWKYFGYTAVVWVVCICSFAF). The Extracellular segment spans residues 433–441 (NYYWENRSH). N438 is a glycosylation site (N-linked (GlcNAc...) asparagine). The chain crosses the membrane as a helical span at residues 442 to 462 (LNYAVSFCMAFHGFAALYALI). The Cytoplasmic portion of the chain corresponds to 463–492 (GKNQQIQNFLRRIDNGEDTCENSVPLSSFG).

Belongs to the G-protein coupled receptor 2 family. Mth subfamily.

Its subcellular location is the cell membrane. In Drosophila melanogaster (Fruit fly), this protein is Probable G-protein coupled receptor Mth-like 8 (mthl8).